Consider the following 286-residue polypeptide: Bifunctional protein FolD (286 aa).

Residues G165 to S167, S190, and V231 each bind NADP(+).

It belongs to the tetrahydrofolate dehydrogenase/cyclohydrolase family. Homodimer.

The catalysed reaction is (6R)-5,10-methylene-5,6,7,8-tetrahydrofolate + NADP(+) = (6R)-5,10-methenyltetrahydrofolate + NADPH. It catalyses the reaction (6R)-5,10-methenyltetrahydrofolate + H2O = (6R)-10-formyltetrahydrofolate + H(+). The protein operates within one-carbon metabolism; tetrahydrofolate interconversion. Functionally, catalyzes the oxidation of 5,10-methylenetetrahydrofolate to 5,10-methenyltetrahydrofolate and then the hydrolysis of 5,10-methenyltetrahydrofolate to 10-formyltetrahydrofolate. The protein is Bifunctional protein FolD of Bacillus mycoides (strain KBAB4) (Bacillus weihenstephanensis).